We begin with the raw amino-acid sequence, 133 residues long: MPTLHVNVVTPDGKVYEGDVDMVSVKTVEGELGILPRHIPLVAPLTVGAVRLKKGSTVDLVAVSGGFVEVRPDQVTILAEAAELPSDIDVERARSAKERAEKRLQQAKQENIDFKRAELSLRRATNRLDVAGR.

This sequence belongs to the ATPase epsilon chain family. In terms of assembly, F-type ATPases have 2 components, CF(1) - the catalytic core - and CF(0) - the membrane proton channel. CF(1) has five subunits: alpha(3), beta(3), gamma(1), delta(1), epsilon(1). CF(0) has three main subunits: a, b and c.

The protein localises to the cell membrane. Produces ATP from ADP in the presence of a proton gradient across the membrane. The polypeptide is ATP synthase epsilon chain (Halalkalibacterium halodurans (strain ATCC BAA-125 / DSM 18197 / FERM 7344 / JCM 9153 / C-125) (Bacillus halodurans)).